The chain runs to 123 residues: Ribosome-binding factor A (123 aa).

The protein belongs to the RbfA family. Monomer. Binds 30S ribosomal subunits, but not 50S ribosomal subunits or 70S ribosomes.

Its subcellular location is the cytoplasm. In terms of biological role, one of several proteins that assist in the late maturation steps of the functional core of the 30S ribosomal subunit. Associates with free 30S ribosomal subunits (but not with 30S subunits that are part of 70S ribosomes or polysomes). Required for efficient processing of 16S rRNA. May interact with the 5'-terminal helix region of 16S rRNA. The chain is Ribosome-binding factor A from Lactobacillus gasseri (strain ATCC 33323 / DSM 20243 / BCRC 14619 / CIP 102991 / JCM 1131 / KCTC 3163 / NCIMB 11718 / NCTC 13722 / AM63).